We begin with the raw amino-acid sequence, 334 residues long: Leucine-rich repeat-containing protein 39 (334 aa).

Residues 10-47 (AVNAVKEVWEKRIKKLNEDLKREKEFQQKLVRIWEERV) adopt a coiled-coil conformation. 9 LRR repeats span residues 84-105 (QLQE…IGRF), 107-128 (NLIV…IGLL), 130-151 (RLQE…LSYC), 153-176 (SLEK…SNLL), 177-198 (KLTH…VLNM), 200-221 (ALEW…IERM), 223-244 (NLHT…ISSM), 246-267 (NLST…MEKM), and 269-290 (NLRF…PPSE).

As to quaternary structure, interacts with MYH7 (via C-terminus).

The protein localises to the cytoplasm. The protein resides in the myofibril. It localises to the sarcomere. Its subcellular location is the m line. Component of the sarcomeric M-band which plays a role in myocyte response to biomechanical stress. May regulate expression of other M-band proteins via an SRF-dependent pathway. Important for normal contractile function in heart. This Bos taurus (Bovine) protein is Leucine-rich repeat-containing protein 39.